Reading from the N-terminus, the 156-residue chain is Small ribosomal subunit protein uS7 (156 aa).

The protein belongs to the universal ribosomal protein uS7 family. As to quaternary structure, part of the 30S ribosomal subunit. Contacts proteins S9 and S11.

In terms of biological role, one of the primary rRNA binding proteins, it binds directly to 16S rRNA where it nucleates assembly of the head domain of the 30S subunit. Is located at the subunit interface close to the decoding center, probably blocks exit of the E-site tRNA. This chain is Small ribosomal subunit protein uS7, found in Dictyoglomus thermophilum (strain ATCC 35947 / DSM 3960 / H-6-12).